A 490-amino-acid chain; its full sequence is Cytochrome P450 2C1 (490 aa).

Cys435 is a heme binding site.

This sequence belongs to the cytochrome P450 family. The cofactor is heme.

It is found in the endoplasmic reticulum membrane. The protein resides in the microsome membrane. The enzyme catalyses an organic molecule + reduced [NADPH--hemoprotein reductase] + O2 = an alcohol + oxidized [NADPH--hemoprotein reductase] + H2O + H(+). Its function is as follows. Cytochromes P450 are a group of heme-thiolate monooxygenases. In liver microsomes, this enzyme is involved in an NADPH-dependent electron transport pathway. It oxidizes a variety of structurally unrelated compounds, including steroids, fatty acids, and xenobiotics. This chain is Cytochrome P450 2C1 (CYP2C1), found in Oryctolagus cuniculus (Rabbit).